The primary structure comprises 357 residues: Dihydroflavonol 4-reductase (357 aa).

Positions 49 and 168 each coordinate NADP(+).

This sequence belongs to the NAD(P)-dependent epimerase/dehydratase family. Dihydroflavonol-4-reductase subfamily.

It carries out the reaction a (2R,3S,4S)-leucoanthocyanidin + NADP(+) = a (2R,3R)-dihydroflavonol + NADPH + H(+). It catalyses the reaction (2S)-flavan-4-ol + NADP(+) = (2S)-flavanone + NADPH + H(+). It functions in the pathway pigment biosynthesis; anthocyanin biosynthesis. Bifunctional enzyme involved in flavonoid metabolism. This chain is Dihydroflavonol 4-reductase (A1), found in Zea mays (Maize).